The sequence spans 324 residues: Tetrahydromethanopterin:alpha-L-glutamate ligase (324 aa).

An ATP-grasp domain is found at 113–321 (SYLLARAGLP…PAEYILEYLQ (209 aa)). ATP is bound by residues Lys148, 195-204 (QEFIENPGRD), and Arg220. Asp265 is a binding site for Mg(2+). Position 265 (Asp265) interacts with Mn(2+). The disordered stretch occupies residues 274-293 (TGNENKKTEDKSTGQGSRIL). Residues Glu294 and Asn296 each coordinate Mg(2+). Positions 294 and 296 each coordinate Mn(2+).

This sequence belongs to the RimK family. MptN subfamily. As to quaternary structure, homodimer. The cofactor is Mg(2+). Mn(2+) is required as a cofactor.

The catalysed reaction is 5,6,7,8-tetrahydromethanopterin + L-glutamate + ATP = 5,6,7,8-tetrahydrosarcinapterin + ADP + phosphate + H(+). Its pathway is cofactor biosynthesis; 5,6,7,8-tetrahydrosarcinapterin biosynthesis. Its function is as follows. Catalyzes the ATP or GTP-dependent addition of one L-glutamate molecule to tetrahydromethanopterin, producing tetrahydrosarcinapterin. The polypeptide is Tetrahydromethanopterin:alpha-L-glutamate ligase (mptN) (Methanosarcina acetivorans (strain ATCC 35395 / DSM 2834 / JCM 12185 / C2A)).